A 688-amino-acid chain; its full sequence is Phosphoinositide 3-phosphatase (688 aa).

The Myotubularin phosphatase domain maps to 155 to 637 (SWDIYDPIKE…KKVQWWWQLY (483 aa)). Catalysis depends on Cys397, which acts as the Phosphocysteine intermediate. A compositionally biased stretch (basic and acidic residues) spans 647 to 668 (ELRHKRDSVPISVDKKSKEHSN). The segment at 647–672 (ELRHKRDSVPISVDKKSKEHSNSDGG) is disordered.

Belongs to the protein-tyrosine phosphatase family. Non-receptor class myotubularin subfamily.

The protein localises to the cytoplasm. The catalysed reaction is a 1,2-diacyl-sn-glycero-3-phospho-(1D-myo-inositol-3-phosphate) + H2O = a 1,2-diacyl-sn-glycero-3-phospho-(1D-myo-inositol) + phosphate. Functionally, lipid phosphatase which dephosphorylates phosphatidylinositol 3-monophosphate (PI3P). Involved in the control of PI3P-dependent signaling and in the maintenance of endosomal system integrity. The polypeptide is Phosphoinositide 3-phosphatase (Saccharomyces cerevisiae (strain ATCC 204508 / S288c) (Baker's yeast)).